The chain runs to 412 residues: Alanyl-tRNA editing protein Aarsd1-A (412 aa).

The Zn(2+) site is built by His-108, His-112, Cys-208, and His-212.

This sequence belongs to the class-II aminoacyl-tRNA synthetase family. Alax-L subfamily. The cofactor is Zn(2+).

Its subcellular location is the cytoplasm. Its function is as follows. Functions in trans to edit the amino acid moiety from incorrectly charged tRNA(Ala). This chain is Alanyl-tRNA editing protein Aarsd1-A (aarsd1-a), found in Xenopus laevis (African clawed frog).